The following is a 420-amino-acid chain: MLQVPGDVQILKEDNVTHSFCGLASVGWMYQKIRDSFFLILGTHTCAHFLQNALGMMIFAKPRFGIALIEEGDLSKNEPTLDEVIAEIKADHNPSVIFLLSSCTPEVMKVDFKGLADHLSTQQTPVLFVPASGLVYNFTQAEDSVLHALVPYCPVAPAGEKSVVFLGSVNDATADDLRAEAEELGIKVGGFLPESRFDRMPAIGPDTILAPIQPYLSRVAVKLERERGSRTLHSLFPFGPDGTRVFWEDLAREFGIEVDLRDREKAAWEKISRQTAMLKGKKVFLTADTMMELPLGRFLRSAGAEVVECSSAYINKKFLAKELKALEGVRVVEQPNFHRQLEDIKRLRPDLVVTSLMTANPFVGHGFIVKWSMEFMLMPIHGWSGVITLANLFVSPLDRRSKLPAFDKAVWLEGVMPAAE.

Positions 21, 46, and 103 each coordinate [4Fe-4S] cluster.

Belongs to the BchN/ChlN family. Protochlorophyllide reductase is composed of three subunits; BchL, BchN and BchB. Forms a heterotetramer of two BchB and two BchN subunits. [4Fe-4S] cluster is required as a cofactor.

It carries out the reaction chlorophyllide a + oxidized 2[4Fe-4S]-[ferredoxin] + 2 ADP + 2 phosphate = protochlorophyllide a + reduced 2[4Fe-4S]-[ferredoxin] + 2 ATP + 2 H2O. Its pathway is porphyrin-containing compound metabolism; bacteriochlorophyll biosynthesis (light-independent). Functionally, component of the dark-operative protochlorophyllide reductase (DPOR) that uses Mg-ATP and reduced ferredoxin to reduce ring D of protochlorophyllide (Pchlide) to form chlorophyllide a (Chlide). This reaction is light-independent. The NB-protein (BchN-BchB) is the catalytic component of the complex. The polypeptide is Light-independent protochlorophyllide reductase subunit N (Chlorobium luteolum (strain DSM 273 / BCRC 81028 / 2530) (Pelodictyon luteolum)).